Reading from the N-terminus, the 271-residue chain is Energy-coupling factor transporter ATP-binding protein EcfA (271 aa).

The region spanning 2 to 231 is the ABC transporter domain; that stretch reads ISIQNLTFYY…PLFLQQYKLT (230 aa). 34-41 contacts ATP; it reads GHNGSGKS.

This sequence belongs to the ABC transporter superfamily. Energy-coupling factor EcfA family. As to quaternary structure, forms a stable energy-coupling factor (ECF) transporter complex composed of 2 membrane-embedded substrate-binding proteins (S component), 2 ATP-binding proteins (A component) and 2 transmembrane proteins (T component).

The protein localises to the cell membrane. In terms of biological role, ATP-binding (A) component of a common energy-coupling factor (ECF) ABC-transporter complex. Unlike classic ABC transporters this ECF transporter provides the energy necessary to transport a number of different substrates. This is Energy-coupling factor transporter ATP-binding protein EcfA from Aster yellows witches'-broom phytoplasma (strain AYWB).